A 207-amino-acid chain; its full sequence is MVSYKLTYFNGRGAGEVSRQIFAYAGQQYEDNRVTQEQWPALKETCAAPFGQLPFLEVDGKKLAQSHAIARFLAREFKLNGKTAWEEAQVNSLADQYKDYSSEARPYFYAVMGFGPGDVETLKKDIFLPAFEKFYGFLVNFLKASGSGFLVGDSLTWIDLAIAQHSADLIAKGGDFSKFPELKAHAEKIQAIPQIKKWIETRPVTPF.

Residues 2 to 81 enclose the GST N-terminal domain; it reads VSYKLTYFNG…FLAREFKLNG (80 aa). Residues Y8, W39, K43, 51–53, and 65–66 contribute to the glutathione site; these read GQL and QS. One can recognise a GST C-terminal domain in the interval 83–207; the sequence is TAWEEAQVNS…WIETRPVTPF (125 aa).

It belongs to the GST superfamily. Sigma family.

It carries out the reaction RX + glutathione = an S-substituted glutathione + a halide anion + H(+). Functionally, conjugation of reduced glutathione to a wide number of exogenous and endogenous hydrophobic electrophiles. May play a role in the detoxification of reactive oxygen species produced during pathogenic bacterial infection. The sequence is that of Probable glutathione S-transferase 5 (gst-5) from Caenorhabditis elegans.